Here is a 359-residue protein sequence, read N- to C-terminus: Nicotinate-nucleotide--dimethylbenzimidazole phosphoribosyltransferase (359 aa).

The Proton acceptor role is filled by glutamate 318.

This sequence belongs to the CobT family. In terms of assembly, homodimer.

The enzyme catalyses 5,6-dimethylbenzimidazole + nicotinate beta-D-ribonucleotide = alpha-ribazole 5'-phosphate + nicotinate + H(+). The protein operates within nucleoside biosynthesis; alpha-ribazole biosynthesis; alpha-ribazole from 5,6-dimethylbenzimidazole: step 1/2. Its function is as follows. Catalyzes the synthesis of alpha-ribazole-5'-phosphate from nicotinate mononucleotide (NAMN) and 5,6-dimethylbenzimidazole (DMB). This chain is Nicotinate-nucleotide--dimethylbenzimidazole phosphoribosyltransferase, found in Escherichia coli O17:K52:H18 (strain UMN026 / ExPEC).